Reading from the N-terminus, the 276-residue chain is Large ribosomal subunit protein uL2 (276 aa).

A disordered region spans residues glycine 223–valine 276. 2 stretches are compositionally biased toward basic and acidic residues: residues aspartate 230–glycine 240 and arginine 263–valine 276.

The protein belongs to the universal ribosomal protein uL2 family. In terms of assembly, part of the 50S ribosomal subunit. Forms a bridge to the 30S subunit in the 70S ribosome.

Its function is as follows. One of the primary rRNA binding proteins. Required for association of the 30S and 50S subunits to form the 70S ribosome, for tRNA binding and peptide bond formation. It has been suggested to have peptidyltransferase activity; this is somewhat controversial. Makes several contacts with the 16S rRNA in the 70S ribosome. This Thermotoga neapolitana (strain ATCC 49049 / DSM 4359 / NBRC 107923 / NS-E) protein is Large ribosomal subunit protein uL2.